Consider the following 66-residue polypeptide: DNA gyrase inhibitor YacG (66 aa).

The Zn(2+) site is built by Cys9, Cys12, Cys28, and Cys32. The disordered stretch occupies residues 45 to 66 (HKIAGSEGSEDELYSGDLEPRH).

This sequence belongs to the DNA gyrase inhibitor YacG family. In terms of assembly, interacts with GyrB. The cofactor is Zn(2+).

Inhibits all the catalytic activities of DNA gyrase by preventing its interaction with DNA. Acts by binding directly to the C-terminal domain of GyrB, which probably disrupts DNA binding by the gyrase. This is DNA gyrase inhibitor YacG from Pseudomonas putida (strain ATCC 700007 / DSM 6899 / JCM 31910 / BCRC 17059 / LMG 24140 / F1).